The chain runs to 155 residues: 3-hydroxyacyl-[acyl-carrier-protein] dehydratase FabZ (155 aa).

H59 is an active-site residue.

The protein belongs to the thioester dehydratase family. FabZ subfamily.

It localises to the cytoplasm. It catalyses the reaction a (3R)-hydroxyacyl-[ACP] = a (2E)-enoyl-[ACP] + H2O. In terms of biological role, involved in unsaturated fatty acids biosynthesis. Catalyzes the dehydration of short chain beta-hydroxyacyl-ACPs and long chain saturated and unsaturated beta-hydroxyacyl-ACPs. In Bartonella quintana (strain Toulouse) (Rochalimaea quintana), this protein is 3-hydroxyacyl-[acyl-carrier-protein] dehydratase FabZ.